We begin with the raw amino-acid sequence, 458 residues long: Histone acetyltransferase KAT8 (458 aa).

Low complexity-rich tracts occupy residues 1–17 (MAAQ…TSGT) and 25–35 (PGENAAVEGPA). Residues 1–52 (MAAQGATAAVAATTSGTVGEGEPGPGENAAVEGPARSPGRVSPPTPARGEPE) form a disordered region. N-acetylalanine is present on alanine 2. Serine 37 and serine 42 each carry phosphoserine. Residues 55–110 (VEIGETYLCRRPDSTWHSAEVIQSRVNDQEGREEFYVHYVGFNRRLDEWVDKNRLA) enclose the Tudor-knot domain. Residue lysine 113 is modified to N6-acetyllysine. The Nuclear localization signal motif lies at 140–149 (RNQKRKHDEI). Residues 174–447 (TKVKYVDKIH…VDSVCLKWAP (274 aa)) form the MYST-type HAT domain. A sufficient for interaction with KANSL1 region spans residues 174-458 (TKVKYVDKIH…KHKQVKLSKK (285 aa)). The C2HC MYST-type zinc-finger motif lies at 207–232 (LWLCEYCLKYMKFEKSYRFHLGQCQW). 4 residues coordinate Zn(2+): cysteine 210, cysteine 213, histidine 226, and cysteine 230. At lysine 274 the chain carries N6-acetyllysine. Acetyl-CoA contacts are provided by isoleucine 317, threonine 319, arginine 325, arginine 326, glycine 327, glycine 329, and lysine 330. Serine 348 bears the Phosphoserine mark. Catalysis depends on glutamate 350, which acts as the Proton donor/acceptor. The acetyl-CoA site is built by serine 354, serine 363, tyrosine 408, and lysine 432.

Belongs to the MYST (SAS/MOZ) family. As to quaternary structure, component of a multisubunit histone acetyltransferase complex (MSL) at least composed of the MOF/KAT8, MSL1/hampin, MSL2L1 and MSL3L1. Component of the NSL complex at least composed of MOF/KAT8, KANSL1, KANSL2, KANSL3, MCRS1, PHF20, OGT1/OGT, WDR5 and HCFC1. Component of some MLL1/MLL complex, at least composed of the core components KMT2A/MLL1, ASH2L, HCFC1, WDR5 and RBBP5, as well as the facultative components BACC1, CHD8, E2F6, HSP70, INO80C, KANSL1, LAS1L, MAX, MCRS1, MGA, MOF/KAT8, PELP1, PHF20, PRP31, RING2, RUVB1/TIP49A, RUVB2/TIP49B, SENP3, TAF1, TAF4, TAF6, TAF7, TAF9 and TEX10. Interacts with the chromodomain of MORF4L1/MRG15. Interacts with ATM (via its Tudor-knot domain); possibly regulating the activity of ATM. Interacts with NELFD. Acetylation at Lys-274 facilitates cognate substrate Lys-binding and acetylation. Although considered as an autoacetylation event, acetylation at Lys-274 probably takes place via a non-enzymatic process following acetyl-CoA-binding, which primes KAT8 for cognate protein-lysine acetylation. As to expression, during oocyte development, expressed in both oocytes and granulosa cells.

It localises to the nucleus. The protein localises to the chromosome. The protein resides in the mitochondrion. The catalysed reaction is L-lysyl-[histone] + acetyl-CoA = N(6)-acetyl-L-lysyl-[histone] + CoA + H(+). The enzyme catalyses L-lysyl-[protein] + acetyl-CoA = N(6)-acetyl-L-lysyl-[protein] + CoA + H(+). It carries out the reaction propanoyl-CoA + L-lysyl-[protein] = N(6)-propanoyl-L-lysyl-[protein] + CoA + H(+). The acetyltransferase activity is inhibited by anacardic acid derivatives. Histone acetyltransferase that catalyzes histone H4 acetylation at 'Lys-5'- and 'Lys-8' (H4K5ac and H4K8ac) or 'Lys-16' (H4K16ac), depending on the context. Catalytic component of the MSL histone acetyltransferase complex, a multiprotein complex that mediates the majority of histone H4 acetylation at 'Lys-16' (H4K16ac), an epigenetic mark that prevents chromatin compaction. H4K16ac constitutes the only acetylation mark intergenerationally transmitted and regulates key biological processes, such as oogenesis, embryonic stem cell pluripotency, hematopoiesis or glucose metabolism. The MSL complex is required for chromosome stability and genome integrity by maintaining homeostatic levels of H4K16ac. The MSL complex is also involved in gene dosage by promoting up-regulation of genes expressed by the X chromosome. X up-regulation is required to compensate for autosomal biallelic expression. The MSL complex also participates in gene dosage compensation by promoting expression of Tsix non-coding RNA. As part of the NSL histone acetyltransferase complex, catalyzes histone H4 acetylation at 'Lys-5'- and 'Lys-8' (H4K5ac and H4K8ac) at transcription start sites and promotes transcription initiation. The NSL complex also acts as a regulator of gene expression in mitochondria: KAT8 associates with mitochondrial DNA and controls expression of respiratory genes in an acetyltransferase-dependent mechanism. Also functions as an acetyltransferase for non-histone targets, such as ALKBH5, COX17, IRF3, KDM1A/LSD1, LMNA, PAX7 or TP53/p53. Acts as an inhibitor of antiviral immunity by acetylating IRF3, preventing IRF3 recruitment to promoters. Acts as a regulator of asymmetric division in muscle stem cells by mediating acetylation of PAX7. As part of the NSL complex, acetylates TP53/p53 at 'Lys-120'. Acts as a regulator of epithelial-to-mesenchymal transition as part of the NSL complex by mediating acetylation of KDM1A/LSD1. The NSL complex is required for nuclear architecture maintenance by mediating acetylation of LMNA. Promotes mitochondrial integrity by catalyzing acetylation of COX17. In addition to protein acetyltransferase activity, able to mediate protein propionylation. This is Histone acetyltransferase KAT8 from Mus musculus (Mouse).